We begin with the raw amino-acid sequence, 325 residues long: Centromere protein O (325 aa).

A disordered region spans residues 1–35; that stretch reads MEEERNSDEKENALCGRSLTAASRDGGGRMPAAPL. Residues 55–112 are a coiled coil; sequence LEMLEAQAHELGLKQEEKEQQEKKLDRLKARVQELRARRDELRAKVELQEKRLLDKEG.

It belongs to the CENP-O/MCM21 family. Component of the CENPA-HI complex, at least composed of CENPH, CENPI, CENPK, CENPL, CENPM, CENPO and CENPP. Component of a discrete complex composed of at least CENPO, CENPP, CENPQ, CENPR and CENPU.

The protein localises to the nucleus. It localises to the chromosome. The protein resides in the centromere. In terms of biological role, component of the CENPA-HI complex, a centromeric complex involved in assembly of kinetochore proteins, mitotic progression and chromosome segregation. Involved in kinetochore assembly and required for recovery from spindle damage. In Gallus gallus (Chicken), this protein is Centromere protein O (CENPO).